A 145-amino-acid polypeptide reads, in one-letter code: D-aminoacyl-tRNA deacylase (145 aa).

The Gly-cisPro motif, important for rejection of L-amino acids signature appears at 137–138 (GP).

Belongs to the DTD family. As to quaternary structure, homodimer.

It localises to the cytoplasm. It catalyses the reaction glycyl-tRNA(Ala) + H2O = tRNA(Ala) + glycine + H(+). The catalysed reaction is a D-aminoacyl-tRNA + H2O = a tRNA + a D-alpha-amino acid + H(+). Functionally, an aminoacyl-tRNA editing enzyme that deacylates mischarged D-aminoacyl-tRNAs. Also deacylates mischarged glycyl-tRNA(Ala), protecting cells against glycine mischarging by AlaRS. Acts via tRNA-based rather than protein-based catalysis; rejects L-amino acids rather than detecting D-amino acids in the active site. By recycling D-aminoacyl-tRNA to D-amino acids and free tRNA molecules, this enzyme counteracts the toxicity associated with the formation of D-aminoacyl-tRNA entities in vivo and helps enforce protein L-homochirality. The protein is D-aminoacyl-tRNA deacylase of Salmonella choleraesuis (strain SC-B67).